We begin with the raw amino-acid sequence, 303 residues long: Mitochondrial basic amino acids transporter (303 aa).

The next 6 membrane-spanning stretches (helical) occupy residues 2–22, 61–81, 96–116, 153–172, 187–207, and 255–275; these read ALDF…GHPF, GLGS…GVQG, FLAG…MELA, GMVS…FLTY, LLVP…WLST, and LLRA…VLTY. 3 Solcar repeats span residues 2-86, 90-178, and 185-275; these read ALDF…TLRA, DSPL…LTRA, and DRLL…VLTY. The disordered stretch occupies residues 282-303; the sequence is GPEGEAVPAAPAGPALAQPSSL. Low complexity predominate over residues 284–303; the sequence is EGEAVPAAPAGPALAQPSSL.

It belongs to the mitochondrial carrier (TC 2.A.29) family.

It is found in the mitochondrion inner membrane. The catalysed reaction is L-lysine(out) + L-arginine(in) = L-lysine(in) + L-arginine(out). It carries out the reaction L-histidine(out) + L-arginine(in) = L-histidine(in) + L-arginine(out). The enzyme catalyses L-ornithine(in) + L-arginine(out) = L-ornithine(out) + L-arginine(in). It catalyses the reaction L-homoarginine(in) + L-arginine(out) = L-homoarginine(out) + L-arginine(in). The catalysed reaction is N(omega)-methyl-L-arginine(in) + L-arginine(out) = N(omega)-methyl-L-arginine(out) + L-arginine(in). It carries out the reaction L-arginine(in) = L-arginine(out). The enzyme catalyses L-lysine(in) = L-lysine(out). It catalyses the reaction L-ornithine(in) = L-ornithine(out). The catalysed reaction is L-histidine(out) = L-histidine(in). Mitochondrial transporter of arginine, lysine, homoarginine, methylarginine and, to a much lesser extent, ornithine and histidine. Does not transport carnitine nor acylcarnitines. Functions by both counter-exchange and uniport mechanisms. Plays a physiological role in the import of basic amino acids into mitochondria for mitochondrial protein synthesis and amino acid degradation. This Homo sapiens (Human) protein is Mitochondrial basic amino acids transporter.